Reading from the N-terminus, the 226-residue chain is Phosphoglycolate phosphatase (226 aa).

The Nucleophile role is filled by aspartate 9. Mg(2+) contacts are provided by aspartate 9 and aspartate 11. A substrate-binding site is contributed by lysine 150. Mg(2+) contacts are provided by aspartate 173 and aspartate 177.

This sequence belongs to the archaeal SPP-like hydrolase family. It depends on Mg(2+) as a cofactor.

The catalysed reaction is 2-phosphoglycolate + H2O = glycolate + phosphate. Catalyzes the dephosphorylation of 2-phosphoglycolate. This is Phosphoglycolate phosphatase from Methanococcoides burtonii (strain DSM 6242 / NBRC 107633 / OCM 468 / ACE-M).